Here is a 279-residue protein sequence, read N- to C-terminus: Cell death abnormality protein 2 (279 aa).

The region spanning 14–115 (FYFPGMSREE…EASLLAAYKK (102 aa)) is the SH2 domain. Positions 116-176 (PIIEVVVGTF…PANYVQIQME (61 aa)) constitute an SH3 1 domain. Positions 181–213 (RTSKGASQSSIGSSGGGAERFSSASTSSDNIEL) are disordered. The segment covering 202 to 211 (SSASTSSDNI) has biased composition (polar residues). One can recognise an SH3 2 domain in the interval 214-277 (QPRLPAKAKV…PHTYLRFTAV (64 aa)).

It belongs to the CRK family. As to quaternary structure, interacts with ced-5 (via C-terminus which contains a candidate SH3-binding, proline-rich region). Forms a ternary complex with ced-5 and ced-12. Interacts (via SH2 domain) with src-1 (when activated and phosphorylated at 'Tyr-416').

Functionally, required for cell migration and engulfment of cell corpses but not for programmed cell death/apoptosis. Has a role in the migration of the 2 gonadal distal tip cells (DTCs). Plays a role in protecting dopaminergic neurons from oxidative stress-induced degeneration. The sequence is that of Cell death abnormality protein 2 from Caenorhabditis elegans.